The following is a 142-amino-acid chain: Small ribosomal subunit protein bS18c (142 aa).

The tract at residues 1 to 21 (MDRITGPFRKSKKSFRKPLPP) is disordered.

It belongs to the bacterial ribosomal protein bS18 family. Part of the 30S ribosomal subunit.

The protein resides in the plastid. The chain is Small ribosomal subunit protein bS18c from Cuscuta gronovii (Common dodder).